Reading from the N-terminus, the 569-residue chain is Small ribosomal subunit protein bS1 (569 aa).

S1 motif domains lie at 52–116, 134–199, 220–288, 305–375, 392–462, and 479–548; these read GAIL…LSRE, GSIV…VSRR, GERR…LGLK, GKRV…LGLK, GLRV…LGVK, and GSDI…LSIK.

This sequence belongs to the bacterial ribosomal protein bS1 family.

In terms of biological role, binds mRNA; thus facilitating recognition of the initiation point. It is needed to translate mRNA with a short Shine-Dalgarno (SD) purine-rich sequence. In Chlamydia trachomatis serovar D (strain ATCC VR-885 / DSM 19411 / UW-3/Cx), this protein is Small ribosomal subunit protein bS1 (rpsA).